The sequence spans 176 residues: Ribosome rescue factor SmrB (176 aa).

Residues 93–168 (LDLHGYRQSE…GDAALLVLID (76 aa)) enclose the Smr domain.

It belongs to the SmrB family. Associates with collided ribosomes, but not with correctly translating polysomes.

Its function is as follows. Acts as a ribosome collision sensor. Detects stalled/collided disomes (pairs of ribosomes where the leading ribosome is stalled and a second ribosome has collided with it) and endonucleolytically cleaves mRNA at the 5' boundary of the stalled ribosome. Stalled/collided disomes form a new interface (primarily via the 30S subunits) that binds SmrB. Cleaved mRNA becomes available for tmRNA ligation, leading to ribosomal subunit dissociation and rescue of stalled ribosomes. The polypeptide is Ribosome rescue factor SmrB (Shewanella putrefaciens (strain CN-32 / ATCC BAA-453)).